A 432-amino-acid chain; its full sequence is Histidine--tRNA ligase (432 aa).

Belongs to the class-II aminoacyl-tRNA synthetase family.

The protein localises to the cytoplasm. The enzyme catalyses tRNA(His) + L-histidine + ATP = L-histidyl-tRNA(His) + AMP + diphosphate + H(+). The chain is Histidine--tRNA ligase from Pyrococcus furiosus (strain ATCC 43587 / DSM 3638 / JCM 8422 / Vc1).